Consider the following 337-residue polypeptide: Anthranilate phosphoribosyltransferase (337 aa).

5-phospho-alpha-D-ribose 1-diphosphate contacts are provided by residues glycine 82, 85-86 (GD), threonine 90, 92-95 (NIST), 110-118 (KHGGRSVSS), and serine 122. Glycine 82 is a binding site for anthranilate. Mg(2+) is bound at residue serine 94. Arginine 168 lines the anthranilate pocket. Mg(2+)-binding residues include aspartate 226 and glutamate 227.

It belongs to the anthranilate phosphoribosyltransferase family. As to quaternary structure, homodimer. It depends on Mg(2+) as a cofactor.

The enzyme catalyses N-(5-phospho-beta-D-ribosyl)anthranilate + diphosphate = 5-phospho-alpha-D-ribose 1-diphosphate + anthranilate. Its pathway is amino-acid biosynthesis; L-tryptophan biosynthesis; L-tryptophan from chorismate: step 2/5. In terms of biological role, catalyzes the transfer of the phosphoribosyl group of 5-phosphorylribose-1-pyrophosphate (PRPP) to anthranilate to yield N-(5'-phosphoribosyl)-anthranilate (PRA). The protein is Anthranilate phosphoribosyltransferase of Francisella tularensis subsp. novicida (strain U112).